The following is a 239-amino-acid chain: 1-(5-phosphoribosyl)-5-[(5-phosphoribosylamino)methylideneamino] imidazole-4-carboxamide isomerase (239 aa).

Residue aspartate 8 is the Proton acceptor of the active site. Aspartate 129 acts as the Proton donor in catalysis.

Belongs to the HisA/HisF family.

The protein localises to the cytoplasm. The enzyme catalyses 1-(5-phospho-beta-D-ribosyl)-5-[(5-phospho-beta-D-ribosylamino)methylideneamino]imidazole-4-carboxamide = 5-[(5-phospho-1-deoxy-D-ribulos-1-ylimino)methylamino]-1-(5-phospho-beta-D-ribosyl)imidazole-4-carboxamide. It functions in the pathway amino-acid biosynthesis; L-histidine biosynthesis; L-histidine from 5-phospho-alpha-D-ribose 1-diphosphate: step 4/9. This is 1-(5-phosphoribosyl)-5-[(5-phosphoribosylamino)methylideneamino] imidazole-4-carboxamide isomerase from Bacillus cereus (strain Q1).